The chain runs to 436 residues: GTPase Obg (436 aa).

The region spanning 2-160 (SMFLDTAKIQ…RELLLELKVL (159 aa)) is the Obg domain. Residues 161–338 (ADVGLVGFPS…LLDATAELLD (178 aa)) enclose the OBG-type G domain. GTP is bound by residues 167-174 (GFPSVGKS), 192-196 (FTTIV), 214-217 (DLPG), 284-287 (NKMD), and 319-321 (SSL). Mg(2+)-binding residues include Ser174 and Thr194. The OCT domain maps to 358–436 (GFDEEAPAFE…IGKFEFEFVD (79 aa)).

The protein belongs to the TRAFAC class OBG-HflX-like GTPase superfamily. OBG GTPase family. As to quaternary structure, monomer. The cofactor is Mg(2+).

Its subcellular location is the cytoplasm. Its function is as follows. An essential GTPase which binds GTP, GDP and possibly (p)ppGpp with moderate affinity, with high nucleotide exchange rates and a fairly low GTP hydrolysis rate. Plays a role in control of the cell cycle, stress response, ribosome biogenesis and in those bacteria that undergo differentiation, in morphogenesis control. The sequence is that of GTPase Obg from Streptococcus sanguinis (strain SK36).